Reading from the N-terminus, the 54-residue chain is Large ribosomal subunit protein bL32c (54 aa).

The segment covering Met1–Ala25 has biased composition (basic residues). Residues Met1 to Lys26 are disordered.

This sequence belongs to the bacterial ribosomal protein bL32 family.

The protein localises to the plastid. The protein resides in the chloroplast. In Thalassiosira pseudonana (Marine diatom), this protein is Large ribosomal subunit protein bL32c.